Reading from the N-terminus, the 291-residue chain is GTPase Era (291 aa).

The Era-type G domain occupies Lys-2 to Glu-167. The segment at Gly-10–Ser-17 is G1. Gly-10–Ser-17 provides a ligand contact to GTP. The segment at Asn-36–Arg-40 is G2. A G3 region spans residues Asp-57–Gly-60. GTP contacts are provided by residues Asp-57 to Leu-61 and Asn-116 to Asp-119. Residues Asn-116–Asp-119 form a G4 region. The interval Tyr-146–Ser-148 is G5. Residues Tyr-186–Lys-274 form the KH type-2 domain.

The protein belongs to the TRAFAC class TrmE-Era-EngA-EngB-Septin-like GTPase superfamily. Era GTPase family. In terms of assembly, monomer.

The protein resides in the cytoplasm. It localises to the cell inner membrane. Functionally, an essential GTPase that binds both GDP and GTP, with rapid nucleotide exchange. Plays a role in 16S rRNA processing and 30S ribosomal subunit biogenesis and possibly also in cell cycle regulation and energy metabolism. The protein is GTPase Era of Campylobacter jejuni (strain RM1221).